Consider the following 173-residue polypeptide: NADH-ubiquinone oxidoreductase chain 6 (173 aa).

6 helical membrane-spanning segments follow: residues 1-21 (MTYF…AVAS), 27-47 (YGVV…LSLG), 48-68 (VSFV…VVFV), 87-107 (VVGY…VGGF), 113-133 (FGVV…FSGV), and 139-159 (CGVG…FVVL).

This sequence belongs to the complex I subunit 6 family.

The protein localises to the mitochondrion membrane. It carries out the reaction a ubiquinone + NADH + 5 H(+)(in) = a ubiquinol + NAD(+) + 4 H(+)(out). In terms of biological role, core subunit of the mitochondrial membrane respiratory chain NADH dehydrogenase (Complex I) that is believed to belong to the minimal assembly required for catalysis. Complex I functions in the transfer of electrons from NADH to the respiratory chain. The immediate electron acceptor for the enzyme is believed to be ubiquinone. This Cepphus grylle (Black guillemot) protein is NADH-ubiquinone oxidoreductase chain 6 (MT-ND6).